The following is a 101-amino-acid chain: Enhancer of yellow 2 transcription factor (101 aa).

This sequence belongs to the ENY2 family. In terms of assembly, component of the nuclear pore complex (NPC)-associated AMEX complex (anchoring and mRNA export complex), composed of at least e(y)2 and xmas-2. Component of the SAGA transcription coactivator-HAT complexes, at least composed of Ada2b, e(y)2, Pcaf/Gcn5, Taf10 and Nipped-A/Trrap. Within the SAGA complex, e(y)2, Sgf11, and not/nonstop form an additional subcomplex of SAGA called the DUB module (deubiquitination module). Component of the THO complex, composed of at least e(y)2, HPR1, THO2, THOC5, THOC6 and THOC7. Interacts with e(y)1. Interacts with su(Hw) (via zinc fingers). Interacts with xmas-2; required for localization to the nuclear periphery. Interacts with the nuclear pore complex (NPC).

The protein localises to the nucleus. Its subcellular location is the nucleoplasm. It is found in the cytoplasm. Functionally, involved in mRNA export coupled transcription activation by association with both the AMEX and the SAGA complexes. The SAGA complex is a multiprotein complex that activates transcription by remodeling chromatin and mediating histone acetylation and deubiquitination. Within the SAGA complex, participates in a subcomplex that specifically deubiquitinates histone H2B. The SAGA complex is recruited to specific gene promoters by activators, where it is required for transcription. Required for nuclear receptor-mediated transactivation. Involved in transcription elongation by recruiting the THO complex onto nascent mRNA. The AMEX complex functions in docking export-competent ribonucleoprotein particles (mRNPs) to the nuclear entrance of the nuclear pore complex (nuclear basket). AMEX participates in mRNA export and accurate chromatin positioning in the nucleus by tethering genes to the nuclear periphery. This chain is Enhancer of yellow 2 transcription factor, found in Drosophila sechellia (Fruit fly).